The chain runs to 254 residues: Phosphonates import ATP-binding protein PhnC (254 aa).

The ABC transporter domain occupies 2–246 (IQLKNVSKIY…VFDDIYNGGN (245 aa)). 35 to 42 (GLSGAGKS) contributes to the ATP binding site.

It belongs to the ABC transporter superfamily. Phosphonates importer (TC 3.A.1.9.1) family. As to quaternary structure, the complex is composed of two ATP-binding proteins (PhnC), two transmembrane proteins (PhnE) and a solute-binding protein (PhnD).

Its subcellular location is the cell membrane. It carries out the reaction phosphonate(out) + ATP + H2O = phosphonate(in) + ADP + phosphate + H(+). Part of the ABC transporter complex PhnCDE involved in phosphonates import. Responsible for energy coupling to the transport system. The protein is Phosphonates import ATP-binding protein PhnC of Lactobacillus johnsonii (strain CNCM I-12250 / La1 / NCC 533).